Here is a 339-residue protein sequence, read N- to C-terminus: Serpentine receptor class delta-32 (339 aa).

7 helical membrane passes run 14–34, 45–65, 94–114, 128–148, 188–208, 237–257, and 269–289; these read AAVV…LIFF, VFLA…LLTV, IFTT…LSMV, SGAF…VVSI, LWVA…MFWC, ALTV…LIFL, and FGYI…LVTI.

Belongs to the nematode receptor-like protein srd family.

The protein localises to the membrane. The polypeptide is Serpentine receptor class delta-32 (srd-32) (Caenorhabditis elegans).